Here is a 278-residue protein sequence, read N- to C-terminus: HTH-type transcriptional activator RhaS (278 aa).

Residues asparagine 174–glycine 272 form the HTH araC/xylS-type domain. DNA-binding regions (H-T-H motif) lie at residues glutamate 191–threonine 212 and valine 239–phenylalanine 262.

As to quaternary structure, binds DNA as a dimer.

The protein localises to the cytoplasm. In terms of biological role, activates expression of the rhaBAD and rhaT operons. This chain is HTH-type transcriptional activator RhaS, found in Citrobacter koseri (strain ATCC BAA-895 / CDC 4225-83 / SGSC4696).